Consider the following 413-residue polypeptide: Serine hydroxymethyltransferase (413 aa).

(6S)-5,6,7,8-tetrahydrofolate-binding positions include Leu-118 and 122–124; that span reads GHL. N6-(pyridoxal phosphate)lysine is present on Lys-228.

It belongs to the SHMT family. In terms of assembly, homodimer. It depends on pyridoxal 5'-phosphate as a cofactor.

It is found in the cytoplasm. The enzyme catalyses (6R)-5,10-methylene-5,6,7,8-tetrahydrofolate + glycine + H2O = (6S)-5,6,7,8-tetrahydrofolate + L-serine. It participates in one-carbon metabolism; tetrahydrofolate interconversion. The protein operates within amino-acid biosynthesis; glycine biosynthesis; glycine from L-serine: step 1/1. Its function is as follows. Catalyzes the reversible interconversion of serine and glycine with tetrahydrofolate (THF) serving as the one-carbon carrier. This reaction serves as the major source of one-carbon groups required for the biosynthesis of purines, thymidylate, methionine, and other important biomolecules. Also exhibits THF-independent aldolase activity toward beta-hydroxyamino acids, producing glycine and aldehydes, via a retro-aldol mechanism. This is Serine hydroxymethyltransferase from Phytoplasma australiense.